Consider the following 178-residue polypeptide: Large ribosomal subunit protein uL13m (178 aa).

The protein belongs to the universal ribosomal protein uL13 family. In terms of assembly, component of the mitochondrial ribosome large subunit (39S) which comprises a 16S rRNA and about 50 distinct proteins.

Its subcellular location is the mitochondrion. This Drosophila melanogaster (Fruit fly) protein is Large ribosomal subunit protein uL13m (mRpL13).